The following is a 138-amino-acid chain: Altered inheritance of mitochondria protein 11 (138 aa).

The next 2 membrane-spanning stretches (helical) occupy residues 17 to 34 (ARFYGAAAFTLITMRLIS) and 67 to 89 (LTYASAASIGTFSTLIFGFCWAL).

It belongs to the AIM11 family.

The protein localises to the membrane. The polypeptide is Altered inheritance of mitochondria protein 11 (AIM11) (Saccharomyces cerevisiae (strain JAY291) (Baker's yeast)).